A 215-amino-acid chain; its full sequence is Riboflavin synthase (215 aa).

Lumazine-binding repeat units follow at residues 1-96 (MFTG…FGGH) and 97-193 (FVSG…YRFL). Residues 4-6 (GII), 47-49 (CLT), 61-66 (DVMPET), 100-102 (GHV), Lys-135, 144-146 (SLT), and 158-163 (SLIPHT) each bind 2,4-dihydroxypteridine.

In terms of assembly, homotrimer. Can interact with 6,7-dimethyl-8-ribityllumazine synthase, forming a lumazine synthase/riboflavin synthase complex, also designated as 'heavy riboflavin synthase complex', which consists of a trimer of riboflavin synthase enclosed within an icosahedral structure composed of 60 subunits of 6,7-dimethyl-8-ribityllumazine synthase.

It catalyses the reaction 2 6,7-dimethyl-8-(1-D-ribityl)lumazine + H(+) = 5-amino-6-(D-ribitylamino)uracil + riboflavin. It participates in cofactor biosynthesis; riboflavin biosynthesis; riboflavin from 2-hydroxy-3-oxobutyl phosphate and 5-amino-6-(D-ribitylamino)uracil: step 2/2. With respect to regulation, is activated by sulfite ions. Functionally, catalyzes the dismutation of two molecules of 6,7-dimethyl-8-ribityllumazine, resulting in the formation of riboflavin and 5-amino-6-(D-ribitylamino)uracil. The sequence is that of Riboflavin synthase (ribE) from Bacillus subtilis (strain 168).